A 1136-amino-acid polypeptide reads, in one-letter code: Carbamoyl phosphate synthase large chain (1136 aa).

Residues 1–402 are carboxyphosphate synthetic domain; that stretch reads MPKRTDIKSV…SLGKAMRSID (402 aa). Arg-129, Arg-169, Gly-175, Gly-176, Glu-208, Ile-210, Glu-215, Gly-241, Val-242, His-243, Gln-285, and Glu-299 together coordinate ATP. In terms of domain architecture, ATP-grasp 1 spans 133–328; it reads KKVVKEAGAE…IAKIATKLAL (196 aa). Gln-285, Glu-299, and Asn-301 together coordinate Mg(2+). Mn(2+) is bound by residues Gln-285, Glu-299, and Asn-301. The oligomerization domain stretch occupies residues 403–551; the sequence is KRHMGFSWDG…YYYSCYADET (149 aa). The interval 552–962 is carbamoyl phosphate synthetic domain; that stretch reads ELRKREREAV…AFAKSQLASY (411 aa). In terms of domain architecture, ATP-grasp 2 spans 681–881; the sequence is GEVLRQEHLN…LAKAAARIMA (201 aa). 10 residues coordinate ATP: Arg-717, Lys-765, Leu-767, Glu-772, Gly-797, Val-798, His-799, Ser-800, Gln-840, and Glu-852. Mg(2+) contacts are provided by Gln-840, Glu-852, and Asn-854. Positions 840, 852, and 854 each coordinate Mn(2+). The interval 963-1136 is allosteric domain; that stretch reads EGGLPTNGNV…KEEGEEARAQ (174 aa). The region spanning 964–1122 is the MGS-like domain; sequence GGLPTNGNVF…QEHSRELYEL (159 aa).

This sequence belongs to the CarB family. As to quaternary structure, composed of two chains; the small (or glutamine) chain promotes the hydrolysis of glutamine to ammonia, which is used by the large (or ammonia) chain to synthesize carbamoyl phosphate. Tetramer of heterodimers (alpha,beta)4. Mg(2+) is required as a cofactor. Requires Mn(2+) as cofactor.

The catalysed reaction is hydrogencarbonate + L-glutamine + 2 ATP + H2O = carbamoyl phosphate + L-glutamate + 2 ADP + phosphate + 2 H(+). It carries out the reaction hydrogencarbonate + NH4(+) + 2 ATP = carbamoyl phosphate + 2 ADP + phosphate + 2 H(+). The protein operates within amino-acid biosynthesis; L-arginine biosynthesis; carbamoyl phosphate from bicarbonate: step 1/1. It participates in pyrimidine metabolism; UMP biosynthesis via de novo pathway; (S)-dihydroorotate from bicarbonate: step 1/3. Its function is as follows. Large subunit of the glutamine-dependent carbamoyl phosphate synthetase (CPSase). CPSase catalyzes the formation of carbamoyl phosphate from the ammonia moiety of glutamine, carbonate, and phosphate donated by ATP, constituting the first step of 2 biosynthetic pathways, one leading to arginine and/or urea and the other to pyrimidine nucleotides. The large subunit (synthetase) binds the substrates ammonia (free or transferred from glutamine from the small subunit), hydrogencarbonate and ATP and carries out an ATP-coupled ligase reaction, activating hydrogencarbonate by forming carboxy phosphate which reacts with ammonia to form carbamoyl phosphate. The chain is Carbamoyl phosphate synthase large chain from Bifidobacterium animalis subsp. lactis (strain AD011).